The sequence spans 414 residues: Serine/threonine transporter SstT (414 aa).

8 consecutive transmembrane segments (helical) span residues 16–36 (GSLVKQILVGLVLGILLAWVS), 46–66 (LGTLFVGALKAVAPILVLMLV), 84–104 (ILFLYLLGTFSAALAAVVFSF), 143–163 (ALLNANYIGILVWAVGLGFAL), 180–200 (AVTFMVKLVIRFAPVGIFGLV), 219–239 (LVVLIGCMLLVALVVNPLLVF), 300–320 (MAGAAITITVLTLAAVHTLGV), and 332–352 (VVASLCACGASGVAGGSLLLI).

The protein belongs to the dicarboxylate/amino acid:cation symporter (DAACS) (TC 2.A.23) family.

The protein localises to the cell inner membrane. The enzyme catalyses L-serine(in) + Na(+)(in) = L-serine(out) + Na(+)(out). It carries out the reaction L-threonine(in) + Na(+)(in) = L-threonine(out) + Na(+)(out). Involved in the import of serine and threonine into the cell, with the concomitant import of sodium (symport system). This Salmonella arizonae (strain ATCC BAA-731 / CDC346-86 / RSK2980) protein is Serine/threonine transporter SstT.